The following is a 113-amino-acid chain: MDLLKSLEEEQLRKDLPEFRPGDTVKVYFKVIEGNRERIQPYEGVVIRKRGSGLSATFTVRRVSYGIGVERTFPLHSPRIEKIEVIRRGKVRRARLYYLRKLTGKAARIAERR.

This sequence belongs to the bacterial ribosomal protein bL19 family.

Its function is as follows. This protein is located at the 30S-50S ribosomal subunit interface and may play a role in the structure and function of the aminoacyl-tRNA binding site. This Carboxydothermus hydrogenoformans (strain ATCC BAA-161 / DSM 6008 / Z-2901) protein is Large ribosomal subunit protein bL19.